A 307-amino-acid chain; its full sequence is tRNA pseudouridine synthase B (307 aa).

Residue aspartate 41 is the Nucleophile of the active site.

It belongs to the pseudouridine synthase TruB family. Type 1 subfamily.

It catalyses the reaction uridine(55) in tRNA = pseudouridine(55) in tRNA. Its function is as follows. Responsible for synthesis of pseudouridine from uracil-55 in the psi GC loop of transfer RNAs. This is tRNA pseudouridine synthase B from Prochlorococcus marinus (strain AS9601).